The following is a 277-amino-acid chain: Sulfur carrier protein FdhD (277 aa).

Residue Cys121 is the Cysteine persulfide intermediate of the active site. A Mo-bis(molybdopterin guanine dinucleotide)-binding site is contributed by 260–265 (FCKPGR).

The protein belongs to the FdhD family.

It is found in the cytoplasm. Its function is as follows. Required for formate dehydrogenase (FDH) activity. Acts as a sulfur carrier protein that transfers sulfur from IscS to the molybdenum cofactor prior to its insertion into FDH. The sequence is that of Sulfur carrier protein FdhD from Shigella flexneri serotype 5b (strain 8401).